We begin with the raw amino-acid sequence, 612 residues long: Probable cytosolic Fe-S cluster assembly factor SJAG_02895 (612 aa).

G13 to S20 is an ATP binding site. Residues C200 and C203 each coordinate [4Fe-4S] cluster. WD repeat units lie at residues G287–V326, Y330–V370, G375–C414, E420–T459, S464–A503, T528–H566, and A574–A612.

In the N-terminal section; belongs to the Mrp/NBP35 ATP-binding proteins family. NUBP2/CFD1 subfamily. This sequence in the C-terminal section; belongs to the WD repeat CIA1 family. As to quaternary structure, heterotetramer of 2 nbp35 and 2 SJAG_02895 chains. The cofactor is [4Fe-4S] cluster.

Its subcellular location is the cytoplasm. It is found in the nucleus. Fusion protein of two essential components of the cytosolic iron-sulfur (Fe/S) protein assembly (CIA) machinery. Required for maturation of extramitochondrial Fe-S proteins. May form a heterotetramer with nubp35, functioning as a Fe-S scaffold complex, mediating the de novo assembly of an Fe-S cluster and its transfer to target apoproteins. The polypeptide is Probable cytosolic Fe-S cluster assembly factor SJAG_02895 (Schizosaccharomyces japonicus (strain yFS275 / FY16936) (Fission yeast)).